The primary structure comprises 464 residues: Chromosomal replication initiator protein DnaA (464 aa).

The segment at 1–82 is domain I, interacts with DnaA modulators; sequence MSLSLWQQCL…LLRFEVGSKP (82 aa). The interval 82-127 is domain II; it reads PITQVISQTVTASVSSAPAAPAARTAAPSRPSWDNAAAQPELSYRS. Positions 98–113 are enriched in low complexity; it reads APAAPAARTAAPSRPS. The interval 98–117 is disordered; that stretch reads APAAPAARTAAPSRPSWDNA. The domain III, AAA+ region stretch occupies residues 128 to 344; it reads NVNPKHTFDN…GALNRVIANA (217 aa). 4 residues coordinate ATP: Gly-172, Gly-174, Lys-175, and Thr-176. Residues 345–464 form a domain IV, binds dsDNA region; sequence NFTGRAITID…FSNLIRTLSS (120 aa).

This sequence belongs to the DnaA family. As to quaternary structure, oligomerizes as a right-handed, spiral filament on DNA at oriC.

It is found in the cytoplasm. In terms of biological role, plays an important role in the initiation and regulation of chromosomal replication. Binds to the origin of replication; it binds specifically double-stranded DNA at a 9 bp consensus (dnaA box): 5'-TTATC[CA]A[CA]A-3'. DnaA binds to ATP and to acidic phospholipids. DnaA can inhibit its own gene expression as well as that of other genes. Functionally, plays an essential role in the initiation and regulation of chromosomal replication. ATP-DnaA binds to the origin of replication (oriC) to initiate formation of the DNA replication initiation complex once per cell cycle. Binds the DnaA box (a 9 base pair repeat at the origin) and separates the double-stranded (ds)DNA. Forms a right-handed helical filament on oriC DNA; dsDNA binds to the exterior of the filament while single-stranded (ss)DNA is stabiized in the filament's interior. The ATP-DnaA-oriC complex binds and stabilizes one strand of the AT-rich DNA unwinding element (DUE), permitting loading of DNA polymerase. After initiation quickly degrades to an ADP-DnaA complex that is not apt for DNA replication. Binds acidic phospholipids. This Serratia marcescens protein is Chromosomal replication initiator protein DnaA.